The sequence spans 267 residues: Tryptophan synthase alpha chain (267 aa).

Residues Glu39 and Asp50 each act as proton acceptor in the active site.

The protein belongs to the TrpA family. In terms of assembly, tetramer of two alpha and two beta chains.

It catalyses the reaction (1S,2R)-1-C-(indol-3-yl)glycerol 3-phosphate + L-serine = D-glyceraldehyde 3-phosphate + L-tryptophan + H2O. The protein operates within amino-acid biosynthesis; L-tryptophan biosynthesis; L-tryptophan from chorismate: step 5/5. Its function is as follows. The alpha subunit is responsible for the aldol cleavage of indoleglycerol phosphate to indole and glyceraldehyde 3-phosphate. The polypeptide is Tryptophan synthase alpha chain (Helicobacter hepaticus (strain ATCC 51449 / 3B1)).